The primary structure comprises 46 residues: Large ribosomal subunit protein bL36 (46 aa).

It belongs to the bacterial ribosomal protein bL36 family.

The sequence is that of Large ribosomal subunit protein bL36 from Photorhabdus laumondii subsp. laumondii (strain DSM 15139 / CIP 105565 / TT01) (Photorhabdus luminescens subsp. laumondii).